The sequence spans 370 residues: Phosphate acyltransferase (370 aa).

Belongs to the PlsX family. In terms of assembly, homodimer. Probably interacts with PlsY.

It localises to the cytoplasm. It catalyses the reaction a fatty acyl-[ACP] + phosphate = an acyl phosphate + holo-[ACP]. It functions in the pathway lipid metabolism; phospholipid metabolism. Its function is as follows. Catalyzes the reversible formation of acyl-phosphate (acyl-PO(4)) from acyl-[acyl-carrier-protein] (acyl-ACP). This enzyme utilizes acyl-ACP as fatty acyl donor, but not acyl-CoA. In Paracoccus denitrificans (strain Pd 1222), this protein is Phosphate acyltransferase.